Consider the following 89-residue polypeptide: Protein FAM25A (89 aa).

This sequence belongs to the FAM25 family.

This Mus musculus (Mouse) protein is Protein FAM25A.